Reading from the N-terminus, the 96-residue chain is Co-chaperonin GroES (96 aa).

It belongs to the GroES chaperonin family. Heptamer of 7 subunits arranged in a ring. Interacts with the chaperonin GroEL.

It is found in the cytoplasm. Together with the chaperonin GroEL, plays an essential role in assisting protein folding. The GroEL-GroES system forms a nano-cage that allows encapsulation of the non-native substrate proteins and provides a physical environment optimized to promote and accelerate protein folding. GroES binds to the apical surface of the GroEL ring, thereby capping the opening of the GroEL channel. In Neisseria meningitidis serogroup B (strain ATCC BAA-335 / MC58), this protein is Co-chaperonin GroES.